A 239-amino-acid polypeptide reads, in one-letter code: tRNA (guanine-N(7)-)-methyltransferase (239 aa).

S-adenosyl-L-methionine contacts are provided by glutamate 69, glutamate 94, aspartate 121, and aspartate 144. Aspartate 144 is an active-site residue. Residues lysine 148, aspartate 180, and 217 to 220 contribute to the substrate site; that span reads TKFE.

The protein belongs to the class I-like SAM-binding methyltransferase superfamily. TrmB family. Monomer.

The enzyme catalyses guanosine(46) in tRNA + S-adenosyl-L-methionine = N(7)-methylguanosine(46) in tRNA + S-adenosyl-L-homocysteine. Its pathway is tRNA modification; N(7)-methylguanine-tRNA biosynthesis. Catalyzes the formation of N(7)-methylguanine at position 46 (m7G46) in tRNA. The sequence is that of tRNA (guanine-N(7)-)-methyltransferase from Buchnera aphidicola subsp. Acyrthosiphon pisum (strain 5A).